The following is a 283-amino-acid chain: ATP phosphoribosyltransferase (283 aa).

It belongs to the ATP phosphoribosyltransferase family. Long subfamily. Requires Mg(2+) as cofactor.

The protein resides in the cytoplasm. It catalyses the reaction 1-(5-phospho-beta-D-ribosyl)-ATP + diphosphate = 5-phospho-alpha-D-ribose 1-diphosphate + ATP. Its pathway is amino-acid biosynthesis; L-histidine biosynthesis; L-histidine from 5-phospho-alpha-D-ribose 1-diphosphate: step 1/9. Feedback inhibited by histidine. In terms of biological role, catalyzes the condensation of ATP and 5-phosphoribose 1-diphosphate to form N'-(5'-phosphoribosyl)-ATP (PR-ATP). Has a crucial role in the pathway because the rate of histidine biosynthesis seems to be controlled primarily by regulation of HisG enzymatic activity. This is ATP phosphoribosyltransferase from Salinibacter ruber (strain DSM 13855 / M31).